Consider the following 81-residue polypeptide: Sulfur carrier protein TusA (81 aa).

Catalysis depends on Cys19, which acts as the Cysteine persulfide intermediate.

It belongs to the sulfur carrier protein TusA family. In terms of assembly, interacts with IscS.

Its subcellular location is the cytoplasm. It functions in the pathway tRNA modification. Functionally, sulfur carrier protein involved in sulfur trafficking in the cell. Part of a sulfur-relay system required for 2-thiolation during synthesis of 2-thiouridine of the modified wobble base 5-methylaminomethyl-2-thiouridine (mnm(5)s(2)U) in tRNA. Interacts with IscS and stimulates its cysteine desulfurase activity. Accepts an activated sulfur from IscS, which is then transferred to TusD, and thus determines the direction of sulfur flow from IscS to 2-thiouridine formation. Also appears to be involved in sulfur transfer for the biosynthesis of molybdopterin. The sequence is that of Sulfur carrier protein TusA from Salmonella choleraesuis (strain SC-B67).